The chain runs to 238 residues: 5-amino-6-(5-phospho-D-ribitylamino)uracil phosphatase YigB (238 aa).

The active-site Nucleophile is the Asp-16. Residues Asp-16, Asp-18, and Asp-188 each contribute to the Mg(2+) site. 16 to 18 lines the substrate pocket; the sequence is DLD.

This sequence belongs to the HAD-like hydrolase superfamily. It depends on Mg(2+) as a cofactor. Mn(2+) serves as cofactor. The cofactor is Co(2+). Zn(2+) is required as a cofactor.

The enzyme catalyses 5-amino-6-(5-phospho-D-ribitylamino)uracil + H2O = 5-amino-6-(D-ribitylamino)uracil + phosphate. It participates in cofactor biosynthesis; riboflavin biosynthesis; 5-amino-6-(D-ribitylamino)uracil from GTP: step 4/4. Catalyzes the dephosphorylation of 5-amino-6-(5-phospho-D-ribitylamino)uracil, and thus could be involved in the riboflavin biosynthesis pathway. Is also able to dephosphorylate flavin mononucleotide (FMN) and other phosphoric acid esters. YigB is important for the formation of dormant persister cells. In Escherichia coli (strain K12), this protein is 5-amino-6-(5-phospho-D-ribitylamino)uracil phosphatase YigB (yigB).